A 336-amino-acid polypeptide reads, in one-letter code: Inositol 2-dehydrogenase (336 aa).

Belongs to the Gfo/Idh/MocA family. As to quaternary structure, homotetramer.

It carries out the reaction myo-inositol + NAD(+) = scyllo-inosose + NADH + H(+). Its function is as follows. Involved in the oxidation of myo-inositol (MI) to 2-keto-myo-inositol (2KMI or 2-inosose). The chain is Inositol 2-dehydrogenase from Agrobacterium fabrum (strain C58 / ATCC 33970) (Agrobacterium tumefaciens (strain C58)).